The sequence spans 271 residues: Co-chaperone protein DjlA (271 aa).

Topologically, residues 1–6 (MQYWGK) are periplasmic. The helical transmembrane segment at 7–31 (IIGVAVALLMGGGFWGVVLGLLIGH) threads the bilayer. The Cytoplasmic segment spans residues 32–271 (MFDKARSRKM…ELIKQQKGFK (240 aa)). Residues 205-271 (DACNVLGVKP…ELIKQQKGFK (67 aa)) enclose the J domain.

In terms of assembly, homodimer.

The protein resides in the cell inner membrane. Regulatory DnaK co-chaperone. Direct interaction between DnaK and DjlA is needed for the induction of the wcaABCDE operon, involved in the synthesis of a colanic acid polysaccharide capsule, possibly through activation of the RcsB/RcsC phosphotransfer signaling pathway. The colanic acid capsule may help the bacterium survive conditions outside the host. The polypeptide is Co-chaperone protein DjlA (Escherichia coli O157:H7).